Reading from the N-terminus, the 569-residue chain is Dihydroxy-acid dehydratase (569 aa).

Cys61 is a [2Fe-2S] cluster binding site. Asp93 contacts Mg(2+). Cys134 contributes to the [2Fe-2S] cluster binding site. 2 residues coordinate Mg(2+): Asp135 and Lys136. The residue at position 136 (Lys136) is an N6-carboxylysine. A [2Fe-2S] cluster-binding site is contributed by Cys211. Glu462 is a Mg(2+) binding site. Catalysis depends on Ser488, which acts as the Proton acceptor.

It belongs to the IlvD/Edd family. In terms of assembly, homodimer. [2Fe-2S] cluster is required as a cofactor. It depends on Mg(2+) as a cofactor.

It catalyses the reaction (2R)-2,3-dihydroxy-3-methylbutanoate = 3-methyl-2-oxobutanoate + H2O. The enzyme catalyses (2R,3R)-2,3-dihydroxy-3-methylpentanoate = (S)-3-methyl-2-oxopentanoate + H2O. The protein operates within amino-acid biosynthesis; L-isoleucine biosynthesis; L-isoleucine from 2-oxobutanoate: step 3/4. Its pathway is amino-acid biosynthesis; L-valine biosynthesis; L-valine from pyruvate: step 3/4. In terms of biological role, functions in the biosynthesis of branched-chain amino acids. Catalyzes the dehydration of (2R,3R)-2,3-dihydroxy-3-methylpentanoate (2,3-dihydroxy-3-methylvalerate) into 2-oxo-3-methylpentanoate (2-oxo-3-methylvalerate) and of (2R)-2,3-dihydroxy-3-methylbutanoate (2,3-dihydroxyisovalerate) into 2-oxo-3-methylbutanoate (2-oxoisovalerate), the penultimate precursor to L-isoleucine and L-valine, respectively. This chain is Dihydroxy-acid dehydratase, found in Tropheryma whipplei (strain TW08/27) (Whipple's bacillus).